A 193-amino-acid chain; its full sequence is Putative 3-methyladenine DNA glycosylase (193 aa).

Belongs to the DNA glycosylase MPG family.

This is Putative 3-methyladenine DNA glycosylase from Francisella tularensis subsp. tularensis (strain FSC 198).